Reading from the N-terminus, the 465-residue chain is Probable M18 family aminopeptidase 1 (465 aa).

Residues histidine 105, histidine 180, and histidine 441 each contribute to the Zn(2+) site.

This sequence belongs to the peptidase M18 family. The cofactor is Zn(2+).

The chain is Probable M18 family aminopeptidase 1 (apeA) from Clostridium acetobutylicum (strain ATCC 824 / DSM 792 / JCM 1419 / IAM 19013 / LMG 5710 / NBRC 13948 / NRRL B-527 / VKM B-1787 / 2291 / W).